The chain runs to 166 residues: Peptide methionine sulfoxide reductase MsrA (166 aa).

C11 is an active-site residue.

This sequence belongs to the MsrA Met sulfoxide reductase family.

It carries out the reaction L-methionyl-[protein] + [thioredoxin]-disulfide + H2O = L-methionyl-(S)-S-oxide-[protein] + [thioredoxin]-dithiol. The catalysed reaction is [thioredoxin]-disulfide + L-methionine + H2O = L-methionine (S)-S-oxide + [thioredoxin]-dithiol. Has an important function as a repair enzyme for proteins that have been inactivated by oxidation. Catalyzes the reversible oxidation-reduction of methionine sulfoxide in proteins to methionine. This Mycoplasmopsis pulmonis (strain UAB CTIP) (Mycoplasma pulmonis) protein is Peptide methionine sulfoxide reductase MsrA.